Consider the following 269-residue polypeptide: Protein TIFY 11B (269 aa).

One can recognise a Tify domain in the interval 100 to 135 (PESGNSQLTIFFGGKVMVFNEFPEDKAKEIMEVAKE). The tract at residues 160 to 181 (PDLNEPTSSGNNEDQETGQQHQ) is disordered. Over residues 164 to 181 (EPTSSGNNEDQETGQQHQ) the composition is skewed to polar residues. The Jas signature appears at 186–210 (IARRASLHRFFAKRKDRAVARAPYQ). A Nuclear localization signal motif is present at residues 187 to 194 (ARRASLHR). Positions 209 to 269 (YQVNQHGSHL…QSSKNLELKL (61 aa)) are disordered. Residues 250–269 (MPMEVDKKEGQSSKNLELKL) show a composition bias toward basic and acidic residues.

This sequence belongs to the TIFY/JAZ family. Homo- and heterodimer. Interacts with MYC2, AFPH2/NINJA, TIFY10A/JAZ1, TIFY10B/JAZ2, TIFY11A/JAZ5, TIFY5A/JAZ8, TIFY9/JAZ10 and TIFY3B/JAZ12. As to quaternary structure, (Microbial infection) Interacts with the pathogenic Pseudomonas syringae HopZ1a protein. In terms of processing, (Microbial infection) Acetylated by Pseudomonas syringae HopZ1a. Post-translationally, ubiquitinated. Targeted for degradation by the SCF(COI1) E3 ubiquitin ligase-proteasome pathway during jasmonate signaling.

The protein localises to the nucleus. It is found in the cell membrane. Its function is as follows. Repressor of jasmonate responses. This chain is Protein TIFY 11B, found in Arabidopsis thaliana (Mouse-ear cress).